We begin with the raw amino-acid sequence, 262 residues long: Phosphatidylserine decarboxylase proenzyme (262 aa).

Residues Asp86, His142, and Ser226 each act as charge relay system; for autoendoproteolytic cleavage activity in the active site. Residue Ser226 is the Schiff-base intermediate with substrate; via pyruvic acid; for decarboxylase activity of the active site. The residue at position 226 (Ser226) is a Pyruvic acid (Ser); by autocatalysis.

This sequence belongs to the phosphatidylserine decarboxylase family. PSD-B subfamily. Prokaryotic type I sub-subfamily. As to quaternary structure, heterodimer of a large membrane-associated beta subunit and a small pyruvoyl-containing alpha subunit. Pyruvate serves as cofactor. In terms of processing, is synthesized initially as an inactive proenzyme. Formation of the active enzyme involves a self-maturation process in which the active site pyruvoyl group is generated from an internal serine residue via an autocatalytic post-translational modification. Two non-identical subunits are generated from the proenzyme in this reaction, and the pyruvate is formed at the N-terminus of the alpha chain, which is derived from the carboxyl end of the proenzyme. The autoendoproteolytic cleavage occurs by a canonical serine protease mechanism, in which the side chain hydroxyl group of the serine supplies its oxygen atom to form the C-terminus of the beta chain, while the remainder of the serine residue undergoes an oxidative deamination to produce ammonia and the pyruvoyl prosthetic group on the alpha chain. During this reaction, the Ser that is part of the protease active site of the proenzyme becomes the pyruvoyl prosthetic group, which constitutes an essential element of the active site of the mature decarboxylase.

The protein localises to the cell membrane. The catalysed reaction is a 1,2-diacyl-sn-glycero-3-phospho-L-serine + H(+) = a 1,2-diacyl-sn-glycero-3-phosphoethanolamine + CO2. It participates in phospholipid metabolism; phosphatidylethanolamine biosynthesis; phosphatidylethanolamine from CDP-diacylglycerol: step 2/2. In terms of biological role, catalyzes the formation of phosphatidylethanolamine (PtdEtn) from phosphatidylserine (PtdSer). This Bacillus thuringiensis subsp. konkukian (strain 97-27) protein is Phosphatidylserine decarboxylase proenzyme.